A 695-amino-acid chain; its full sequence is Elongation factor G 1 (695 aa).

The region spanning 6-284 (KKVRNIGISA…VTRYLPCPAD (279 aa)) is the tr-type G domain. Residues 15-22 (AHIDSGKT), 82-86 (DTPGH), and 136-139 (NKCD) each bind GTP.

Belongs to the TRAFAC class translation factor GTPase superfamily. Classic translation factor GTPase family. EF-G/EF-2 subfamily.

It is found in the cytoplasm. Functionally, catalyzes the GTP-dependent ribosomal translocation step during translation elongation. During this step, the ribosome changes from the pre-translocational (PRE) to the post-translocational (POST) state as the newly formed A-site-bound peptidyl-tRNA and P-site-bound deacylated tRNA move to the P and E sites, respectively. Catalyzes the coordinated movement of the two tRNA molecules, the mRNA and conformational changes in the ribosome. In Syntrophus aciditrophicus (strain SB), this protein is Elongation factor G 1.